Consider the following 1153-residue polypeptide: Duffy receptor beta form (1153 aa).

Positions 1–21 are cleaved as a signal peptide; sequence MEGKKKRPLFFLLVLLLSHKA. The Extracellular portion of the chain corresponds to 22–1085; sequence NNVLFERMKG…YECFTKGSST (1064 aa). Asn134, Asn179, and Asn202 each carry an N-linked (GlcNAc...) asparagine glycan. 2 disulfides stabilise this stretch: Cys214–Cys243 and Cys227–Cys234. N-linked (GlcNAc...) asparagine glycosylation is found at Asn252 and Asn348. 4 disulfide bridges follow: Cys297/Cys374, Cys412/Cys429, Cys424/Cys504, and Cys433/Cys502. Residues Asn430 and Asn467 are each glycosylated (N-linked (GlcNAc...) asparagine). Disordered regions lie at residues 520–545, 565–591, 612–631, and 655–981; these read LKSA…GAEK, DEAA…DNIE, RGAT…SYSG, and ENSE…LYSH. Polar residues-rich tracts occupy residues 531–542 and 574–586; these read SHSTIQPMSSSG and NGNQ…NIKG. 2 N-linked (GlcNAc...) asparagine glycosylation sites follow: Asn576 and Asn626. Residues 661-675 show a composition bias toward basic and acidic residues; sequence LETKHKIFEPSKDNS. The segment covering 677 to 733 has biased composition (polar residues); it reads NSENSGSMEFKATSSNPITEAVESSSAEGQVQEDSAHRSVNTGRDNSTISAATSDDG. A glycan (N-linked (GlcNAc...) asparagine) is linked at Asn722. Basic and acidic residues predominate over residues 791-800; sequence IDGKNVDIAE. The span at 819–834 shows a compositional bias: polar residues; that stretch reads TDNGNVPRSGNKQNEG. N-linked (GlcNAc...) asparagine glycosylation is found at Asn847 and Asn856. Over residues 867–878 the composition is skewed to basic and acidic residues; it reads GNEKDFQKHDFM. The span at 884-942 shows a compositional bias: low complexity; the sequence is NDQTSSDQTSSDQTSSNQTSSDQTSSNQTSSDQTSSDQISSDQTSSDQTSSNQTSSDQT. Residues Asn900, Asn910, and Asn935 are each glycosylated (N-linked (GlcNAc...) asparagine). Basic and acidic residues predominate over residues 945–969; it reads TEEHHRDNVRNPEIKSSEDMSKGDF. Positions 971-981 are enriched in polar residues; that stretch reads RNSNSNELYSH. The helical transmembrane segment at 1086 to 1106 threads the bilayer; that stretch reads GIGIVYFATGGAFLIILLLFV. Residues 1107-1153 lie on the Cytoplasmic side of the membrane; that stretch reads SKNVASNDYEEEATFDEFVEYSDDIHRTPLMPNHIEHMQQFTPLDYS.

It localises to the membrane. Its function is as follows. Binds to Neu5Gc-sialylated receptors on macaque erythrocytes. The chain is Duffy receptor beta form from Plasmodium knowlesi.